A 554-amino-acid chain; its full sequence is Serine/threonine-protein kinase ROP18 (554 aa).

A helical transmembrane segment spans residues G17–F40. The Protein kinase domain maps to L252–F531. 3 residues coordinate ATP: G262, A264, and K281. The N-linked (GlcNAc...) asparagine glycan is linked to N306. M357, A359, and D362 together coordinate ATP. A glycan (N-linked (GlcNAc...) asparagine) is linked at N377. D409 acts as the Proton acceptor in catalysis. D427 contributes to the ATP binding site. D427 serves as a coordination point for Mg(2+). N-linked (GlcNAc...) asparagine glycosylation is present at N434. The cysteines at positions 478 and 497 are disulfide-linked.

It belongs to the protein kinase superfamily. Ser/Thr protein kinase family. Component of a complex at least composed of ROP18, GRA7 and ROP2. Component of a complex at least composed of ROP18 and ROP5. Interacts with GRA7 in the absence of ROP5. Interacts with mouse IRGB6 (TGTP1/TGTP2).

It is found in the parasitophorous vacuole membrane. The protein localises to the cytoplasmic vesicle. It localises to the secretory vesicle. Its subcellular location is the rhoptry. It catalyses the reaction L-threonyl-[protein] + ATP = O-phospho-L-threonyl-[protein] + ADP + H(+). It carries out the reaction L-seryl-[protein] + ATP = O-phospho-L-seryl-[protein] + ADP + H(+). Kinase activity is enhanced by polymorphic pseudokinase ROP5. In terms of biological role, protein kinase. Virulence factor. Mediates parasite survival in mouse macrophages and monocytes. Reduces the accumulation of mouse IRGA6 (IIGP1) and IRGB6 (TGTP1/TGTP2), immunity-related GTPases (IRGs) that protect mice from infection by certain intracellular pathogens, on the parasitophorous vacuole and IRG-mediated killing of parasites by mouse cells; probably in connection with ROP5. In complex with GRA7, targets IRGs to prevent IRG-mediated parasite killing by mouse cells. Phosphorylates mouse IRGA6 (IIGP1); its activity toward mouse IRGA6 is promoted by GRA7 or ROP5. Phosphorylates mouse IRGB6 (TGTP1/TGTP2). Phosphorylates mouse IRGB10 (GM12250). Does not affect IFN-gamma (IFNG)-mediated parasite killing in human cells that do not possess the large variety of IRGs. The sequence is that of Serine/threonine-protein kinase ROP18 from Toxoplasma gondii.